We begin with the raw amino-acid sequence, 137 residues long: ATP synthase epsilon chain (137 aa).

Belongs to the ATPase epsilon chain family. In terms of assembly, F-type ATPases have 2 components, CF(1) - the catalytic core - and CF(0) - the membrane proton channel. CF(1) has five subunits: alpha(3), beta(3), gamma(1), delta(1), epsilon(1). CF(0) has three main subunits: a, b and c.

Its subcellular location is the cell inner membrane. Produces ATP from ADP in the presence of a proton gradient across the membrane. The chain is ATP synthase epsilon chain from Magnetococcus marinus (strain ATCC BAA-1437 / JCM 17883 / MC-1).